A 713-amino-acid polypeptide reads, in one-letter code: Polyribonucleotide nucleotidyltransferase (713 aa).

The Mg(2+) site is built by Asp488 and Asp494. Positions 555 to 614 (PRIEVMNIPTDKIRDVIGSGGKVIREIVEKTGAKINIEDDGTVKIASSNGKEIEAAKKWI) constitute a KH domain. The region spanning 624 to 692 (GEIYEGTVVK…ERGKVRLSMK (69 aa)) is the S1 motif domain.

Belongs to the polyribonucleotide nucleotidyltransferase family. Mg(2+) is required as a cofactor.

It localises to the cytoplasm. It carries out the reaction RNA(n+1) + phosphate = RNA(n) + a ribonucleoside 5'-diphosphate. Involved in mRNA degradation. Catalyzes the phosphorolysis of single-stranded polyribonucleotides processively in the 3'- to 5'-direction. This is Polyribonucleotide nucleotidyltransferase from Brucella anthropi (strain ATCC 49188 / DSM 6882 / CCUG 24695 / JCM 21032 / LMG 3331 / NBRC 15819 / NCTC 12168 / Alc 37) (Ochrobactrum anthropi).